The chain runs to 193 residues: MSPTGNYLNAITNRRTIYNLKPELPQGVGLDDVKRTVHVILKNTPTAFNSQVNRAVIIVGDTHKRIWDAVASAMPTAEAKKRPESCRDEAYGSVIFFTDEGPTEKLQRDFPALAAAFPTCAAHTTGAVQIQSWTALELLGLGANLQHYNDYVKSALPQDVPIAWTVQSQLVFGVPTALPEEKTFINNVINVYH.

This sequence belongs to the nitroreductase family. It depends on FMN as a cofactor.

Its subcellular location is the cytoplasm. The protein localises to the nucleus. The enzyme catalyses 4-(hydroxyamino)quinoline N-oxide + 2 NAD(+) + H2O = 4-nitroquinoline N-oxide + 2 NADH + 2 H(+). Functionally, type II nitroreductase, able to reduce 4-nitroquinoline N-oxide (4-NQO) into 4-aminoquinoline-N-oxide (4-AQO) via 4-hydroxyaminoquinoline (4-HAQO), using NADH as reductant. involved in the oxidative stress response. Plays a possible role in the metal stress response. Involved in negative regulation of fatty acid metabolism. This is nitroreductase FRM2 from Saccharomyces cerevisiae (strain ATCC 204508 / S288c) (Baker's yeast).